The following is a 275-amino-acid chain: tRNA (guanine-N(1)-)-methyltransferase (275 aa).

Residues Gly-139 and 159-164 contribute to the S-adenosyl-L-methionine site; that span reads IGDYIL.

This sequence belongs to the RNA methyltransferase TrmD family. Homodimer.

It is found in the cytoplasm. It catalyses the reaction guanosine(37) in tRNA + S-adenosyl-L-methionine = N(1)-methylguanosine(37) in tRNA + S-adenosyl-L-homocysteine + H(+). Its function is as follows. Specifically methylates guanosine-37 in various tRNAs. This is tRNA (guanine-N(1)-)-methyltransferase from Lachnoclostridium phytofermentans (strain ATCC 700394 / DSM 18823 / ISDg) (Clostridium phytofermentans).